Here is a 501-residue protein sequence, read N- to C-terminus: MVTMKLLYLTSFASLAVANGPGWDWKPRVHPKVLPQMIHLWDLLQGAQQLEDFAYAYPERNRVFGGRAHEDTVNYLYRELKKTGYYDVYKQPQVHQWTRADQALTVDGQSYDATTMTYSPSVNATAPLAVVNNLGCVEADYPADLTGKIALISRGECTFATKSVLSAKAGAAAALVYNNIEGSMAGTLGGATSELGAYAPIAGISLADGQALIQMIQAGTVTANLWIDSQVENRTTYNVIAQTKGGDPNNVVALGGHTDSVEAGPGINDDGSGIISNLVVAKALTRFSVKNAVRFCFWTAEEFGLLGSNYYVNSLNATEQAKIRLYLNFDMIASPNYALMIYDGDGSAFNLTGPAGSAQIERLFEDYYTSIRKPFVPTEFNGRSDYQAFILNGIPAGGLFTGAEAIKTEEQAQLFGGQAGVALDANYHAKGDNMTNLNREAFLINSRATAFAVATYANSLDSIPPRNMTTVVKRSQLEQAMKRTPHTHTGGTGCYKDRVEQ.

Residues 1-18 (MVTMKLLYLTSFASLAVA) form the signal peptide. The region spanning 119–216 (SPSVNATAPL…ADGQALIQMI (98 aa)) is the PA domain. Residues N123 and N233 are each glycosylated (N-linked (GlcNAc...) asparagine). H257 and D269 together coordinate Zn(2+). E301 functions as the Proton acceptor in the catalytic mechanism. E302 serves as a coordination point for Zn(2+). N316 is a glycosylation site (N-linked (GlcNAc...) asparagine). D330 contacts Zn(2+). N-linked (GlcNAc...) asparagine glycosylation occurs at N350. H428 is a Zn(2+) binding site. N-linked (GlcNAc...) asparagine glycosylation is found at N433 and N467. The segment at 480–501 (AMKRTPHTHTGGTGCYKDRVEQ) is disordered.

This sequence belongs to the peptidase M28 family. M28A subfamily. Monomer. Requires Zn(2+) as cofactor.

Its subcellular location is the secreted. In terms of biological role, extracellular aminopeptidase that releases a wide variety of amino acids from natural peptides and contributes to pathogenicity. The chain is Probable leucine aminopeptidase 2 (lap2) from Aspergillus fumigatus (strain ATCC MYA-4609 / CBS 101355 / FGSC A1100 / Af293) (Neosartorya fumigata).